The chain runs to 148 residues: Probable transcriptional regulator SyrB (148 aa).

Residues 1 to 58 (MADESNTGPVAAAEAVAETQAPAGKRKSSSRRQRTAAGQVAESKTTAKPKRYSETERA) form a disordered region. The segment covering 7 to 23 (TGPVAAAEAVAETQAPA) has biased composition (low complexity). Positions 24–34 (GKRKSSSRRQR) are enriched in basic residues.

The protein belongs to the SyrB family.

Responsible for the repression of SyrM activity. The chain is Probable transcriptional regulator SyrB (syrB) from Sinorhizobium fredii (strain NBRC 101917 / NGR234).